The sequence spans 296 residues: Cutinase est1 (296 aa).

The N-terminal stretch at 1–35 (MSVTTPRREASLLSRAVAVAAAAAATVALAAPAQA) is a signal peptide. The segment at 36–57 (ANPYERGPNPTESMLEARSGPF) is disordered. Residue Tyr95 participates in poly(ethylene terephthalate) binding. Ser165 functions as the Nucleophile in the catalytic mechanism. The poly(ethylene terephthalate) site is built by Met166 and Trp190. Active-site charge relay system residues include Asp211 and His243. Cysteines 276 and 294 form a disulfide.

The protein belongs to the AB hydrolase superfamily. Monomer.

It is found in the secreted. It localises to the periplasm. It catalyses the reaction (ethylene terephthalate)(n) + H2O = (ethylene terephthalate)(n-1) + 4-[(2-hydroxyethoxy)carbonyl]benzoate + H(+). The enzyme catalyses a butanoate ester + H2O = an aliphatic alcohol + butanoate + H(+). The catalysed reaction is cutin + H2O = cutin monomers.. Catalyzes the hydrolysis of cutin, a polyester that forms the structure of plant cuticle. Shows esterase activity towards p-nitrophenol-linked aliphatic esters (pNP-aliphatic esters). Capable of degrading the plastic poly(ethylene terephthalate) (PET), the most abundant polyester plastic in the world. Can also depolymerize the synthetic polyester poly(epsilon-caprolactone) (PCL). The polypeptide is Cutinase est1 (Thermobifida alba (Thermomonospora alba)).